Consider the following 868-residue polypeptide: Protein translocase subunit SecA (868 aa).

Residues Gln85, 103 to 107 (GEGKT), and Asp508 each bind ATP.

The protein belongs to the SecA family. In terms of assembly, monomer and homodimer. Part of the essential Sec protein translocation apparatus which comprises SecA, SecYEG and auxiliary proteins SecDF. Other proteins may also be involved.

The protein localises to the cell membrane. The protein resides in the cytoplasm. It catalyses the reaction ATP + H2O + cellular proteinSide 1 = ADP + phosphate + cellular proteinSide 2.. Part of the Sec protein translocase complex. Interacts with the SecYEG preprotein conducting channel. Has a central role in coupling the hydrolysis of ATP to the transfer of proteins into and across the cell membrane, serving as an ATP-driven molecular motor driving the stepwise translocation of polypeptide chains across the membrane. In Deinococcus radiodurans (strain ATCC 13939 / DSM 20539 / JCM 16871 / CCUG 27074 / LMG 4051 / NBRC 15346 / NCIMB 9279 / VKM B-1422 / R1), this protein is Protein translocase subunit SecA.